Reading from the N-terminus, the 177-residue chain is Large ribosomal subunit protein uL6 (177 aa).

The protein belongs to the universal ribosomal protein uL6 family. Part of the 50S ribosomal subunit.

Functionally, this protein binds to the 23S rRNA, and is important in its secondary structure. It is located near the subunit interface in the base of the L7/L12 stalk, and near the tRNA binding site of the peptidyltransferase center. The sequence is that of Large ribosomal subunit protein uL6 from Methylorubrum populi (strain ATCC BAA-705 / NCIMB 13946 / BJ001) (Methylobacterium populi).